The following is a 332-amino-acid chain: Biotin synthase (332 aa).

In terms of domain architecture, Radical SAM core spans S46–R275. 3 residues coordinate [4Fe-4S] cluster: C61, C65, and C68. The [2Fe-2S] cluster site is built by C106, C138, C198, and R270.

This sequence belongs to the radical SAM superfamily. Biotin synthase family. In terms of assembly, homodimer. The cofactor is [4Fe-4S] cluster. Requires [2Fe-2S] cluster as cofactor.

It carries out the reaction (4R,5S)-dethiobiotin + (sulfur carrier)-SH + 2 reduced [2Fe-2S]-[ferredoxin] + 2 S-adenosyl-L-methionine = (sulfur carrier)-H + biotin + 2 5'-deoxyadenosine + 2 L-methionine + 2 oxidized [2Fe-2S]-[ferredoxin]. It participates in cofactor biosynthesis; biotin biosynthesis; biotin from 7,8-diaminononanoate: step 2/2. In terms of biological role, catalyzes the conversion of dethiobiotin (DTB) to biotin by the insertion of a sulfur atom into dethiobiotin via a radical-based mechanism. The chain is Biotin synthase from Methylobacterium sp. (strain 4-46).